Reading from the N-terminus, the 348-residue chain is Glycerol-1-phosphate dehydrogenase [NAD(P)+] (348 aa).

Residues 94-98 (GKPID) and 116-119 (TAAS) contribute to the NAD(+) site. Position 121 (D121) interacts with substrate. Residue S125 coordinates NAD(+). D168 serves as a coordination point for substrate. Positions 168 and 248 each coordinate Zn(2+). A substrate-binding site is contributed by H252. H264 is a binding site for Zn(2+).

It belongs to the glycerol-1-phosphate dehydrogenase family. The cofactor is Zn(2+).

Its subcellular location is the cytoplasm. The catalysed reaction is sn-glycerol 1-phosphate + NAD(+) = dihydroxyacetone phosphate + NADH + H(+). It carries out the reaction sn-glycerol 1-phosphate + NADP(+) = dihydroxyacetone phosphate + NADPH + H(+). It functions in the pathway membrane lipid metabolism; glycerophospholipid metabolism. Its function is as follows. Catalyzes the NAD(P)H-dependent reduction of dihydroxyacetonephosphate (DHAP or glycerone phosphate) to glycerol 1-phosphate (G1P). The G1P thus generated is used as the glycerophosphate backbone of phospholipids in the cellular membranes of Archaea. The chain is Glycerol-1-phosphate dehydrogenase [NAD(P)+] from Haloquadratum walsbyi (strain DSM 16790 / HBSQ001).